A 585-amino-acid chain; its full sequence is Arginine--tRNA ligase (585 aa).

Positions 131–141 (ANPTGPMHVGH) match the 'HIGH' region motif.

It belongs to the class-I aminoacyl-tRNA synthetase family. Monomer.

Its subcellular location is the cytoplasm. It carries out the reaction tRNA(Arg) + L-arginine + ATP = L-arginyl-tRNA(Arg) + AMP + diphosphate. This is Arginine--tRNA ligase from Chelativorans sp. (strain BNC1).